The following is a 589-amino-acid chain: C-type lectin domain family 4 member F (589 aa).

The Cytoplasmic portion of the chain corresponds to 1-39 (MDGEAVRFCTDNQCVSLHPQEVDSVAMAPAAPKIPRLVQ). The chain crosses the membrane as a helical; Signal-anchor for type II membrane protein span at residues 40 to 60 (ATPAFMAVTLVFSLVTLFVVV). Residues 61–589 (QQQTRPVPKP…TPPCPWILSN (529 aa)) are Extracellular-facing. 8 N-linked (GlcNAc...) asparagine glycosylation sites follow: Asn79, Asn113, Asn207, Asn230, Asn244, Asn312, Asn385, and Asn399. Residues 476–589 (NGGSLYYFSS…TPPCPWILSN (114 aa)) form the C-type lectin domain.

Its subcellular location is the membrane. In terms of biological role, receptor with an affinity for galactose and fucose. Could be involved in endocytosis. The protein is C-type lectin domain family 4 member F (CLEC4F) of Homo sapiens (Human).